The primary structure comprises 873 residues: Alanine--tRNA ligase (873 aa).

Zn(2+) contacts are provided by His-563, His-567, Cys-664, and His-668.

The protein belongs to the class-II aminoacyl-tRNA synthetase family. Zn(2+) serves as cofactor.

It localises to the cytoplasm. The enzyme catalyses tRNA(Ala) + L-alanine + ATP = L-alanyl-tRNA(Ala) + AMP + diphosphate. Its function is as follows. Catalyzes the attachment of alanine to tRNA(Ala) in a two-step reaction: alanine is first activated by ATP to form Ala-AMP and then transferred to the acceptor end of tRNA(Ala). Also edits incorrectly charged Ser-tRNA(Ala) and Gly-tRNA(Ala) via its editing domain. The sequence is that of Alanine--tRNA ligase from Aromatoleum aromaticum (strain DSM 19018 / LMG 30748 / EbN1) (Azoarcus sp. (strain EbN1)).